We begin with the raw amino-acid sequence, 374 residues long: UPF0754 membrane protein SAR1937 (374 aa).

A run of 2 helical transmembrane segments spans residues 4–24 (LFIIIFMIVVGAIIGGVTNVI) and 354–374 (SLGFILGGIIGFFQGLVAIFV).

Belongs to the UPF0754 family.

It is found in the cell membrane. This Staphylococcus aureus (strain MRSA252) protein is UPF0754 membrane protein SAR1937.